Here is a 276-residue protein sequence, read N- to C-terminus: 5'-nucleotidase SurE (276 aa).

Residues Asp-14, Asp-15, Ser-46, and Asn-104 each coordinate a divalent metal cation.

Belongs to the SurE nucleotidase family. The cofactor is a divalent metal cation.

Its subcellular location is the cytoplasm. It catalyses the reaction a ribonucleoside 5'-phosphate + H2O = a ribonucleoside + phosphate. In terms of biological role, nucleotidase that shows phosphatase activity on nucleoside 5'-monophosphates. This is 5'-nucleotidase SurE from Crocosphaera subtropica (strain ATCC 51142 / BH68) (Cyanothece sp. (strain ATCC 51142)).